A 616-amino-acid polypeptide reads, in one-letter code: UvrABC system protein C (616 aa).

The 80-residue stretch at 21–100 folds into the GIY-YIG domain; it reads TCPGVYQFKN…IKDLKPRYNI (80 aa). The UVR domain maps to 214-249; that stretch reads GALIRTLSAEMHRYADELRFEEAAELKIQIEGLRKY.

This sequence belongs to the UvrC family. Interacts with UvrB in an incision complex.

The protein localises to the cytoplasm. Functionally, the UvrABC repair system catalyzes the recognition and processing of DNA lesions. UvrC both incises the 5' and 3' sides of the lesion. The N-terminal half is responsible for the 3' incision and the C-terminal half is responsible for the 5' incision. The chain is UvrABC system protein C from Prosthecochloris aestuarii (strain DSM 271 / SK 413).